We begin with the raw amino-acid sequence, 601 residues long: Glutathione-regulated potassium-efflux system protein KefB (601 aa).

13 helical membrane passes run 4-24 (SDFL…VPLA), 29-49 (IGAV…GLGF), 55-75 (EILH…GLEL), 87-107 (IFGV…GLLM), 115-135 (AAVV…LQLM), 152-172 (VLLF…LLAG), 177-197 (HFDW…LIGG), 207-227 (FIAA…LVLG), 230-250 (LFMD…GVLL), 262-282 (AIDP…GMSL), 284-304 (LGVL…LVAV), 324-344 (MQFA…FSTA), and 356-376 (ALLL…MKLV). Residues 400 to 519 (KPQVIVVGFG…AGVTQFSRET (120 aa)) form the RCK N-terminal domain.

This sequence belongs to the monovalent cation:proton antiporter 2 (CPA2) transporter (TC 2.A.37) family. KefB subfamily. As to quaternary structure, interacts with the regulatory subunit KefG.

It is found in the cell inner membrane. Its function is as follows. Pore-forming subunit of a potassium efflux system that confers protection against electrophiles. Catalyzes K(+)/H(+) antiport. This Shigella boydii serotype 18 (strain CDC 3083-94 / BS512) protein is Glutathione-regulated potassium-efflux system protein KefB.